A 343-amino-acid chain; its full sequence is Uroporphyrinogen decarboxylase (343 aa).

Substrate-binding positions include 25 to 29, Phe44, Asp75, Tyr150, Ser205, and His320; that span reads RQAGR.

This sequence belongs to the uroporphyrinogen decarboxylase family. Homodimer.

The protein localises to the cytoplasm. It catalyses the reaction uroporphyrinogen III + 4 H(+) = coproporphyrinogen III + 4 CO2. Its pathway is porphyrin-containing compound metabolism; protoporphyrin-IX biosynthesis; coproporphyrinogen-III from 5-aminolevulinate: step 4/4. Its function is as follows. Catalyzes the decarboxylation of four acetate groups of uroporphyrinogen-III to yield coproporphyrinogen-III. In Mesorhizobium japonicum (strain LMG 29417 / CECT 9101 / MAFF 303099) (Mesorhizobium loti (strain MAFF 303099)), this protein is Uroporphyrinogen decarboxylase.